We begin with the raw amino-acid sequence, 331 residues long: Putative ankyrin repeat protein RBE_0261 (331 aa).

One copy of the ANK repeat lies at 94 to 159 (QGENVIHKCV…KAKNTLLNIV (66 aa)).

The chain is Putative ankyrin repeat protein RBE_0261 from Rickettsia bellii (strain RML369-C).